The sequence spans 333 residues: Taste receptor type 2 member 38 (333 aa).

The Extracellular segment spans residues 1 to 17 (MLTLTRICTVSYEVRST). A helical membrane pass occupies residues 18 to 38 (FLFISVLEFAVGFLTNAFIFL). Over 39–55 (VNFWDVVKRQPLSNSDC) the chain is Cytoplasmic. A helical membrane pass occupies residues 56–76 (VLLCLSISRLFLHGLLFLSAI). Topologically, residues 77–94 (QLTHFQKLSEPLNHSYHA) are extracellular. A helical transmembrane segment spans residues 95 to 115 (IIMLWMIANQANLWLATCLSL). The Cytoplasmic portion of the chain corresponds to 116 to 142 (LYCSKLIRSSHTFLICLASWVSRKICQ). The helical transmembrane segment at 143-163 (MLLGIILCSCICTVLCVWCYF) threads the bilayer. At 164-190 (SRPHFTVTTVLFTNNNTRLNWQIKDLN) the chain is on the extracellular side. N178 carries an N-linked (GlcNAc...) asparagine glycan. Residues 191–211 (LFYSFLFCYLWSVPPFLLFLV) form a helical membrane-spanning segment. Residues 212-251 (SSGMLTVSLGRHMRTMKVYTRDFRDPSLEAHIKALKSLVS) are Cytoplasmic-facing. Residues 252–272 (FFCFFVISSCAAFISVPLLIL) traverse the membrane as a helical segment. The Extracellular portion of the chain corresponds to 273 to 276 (WRDK). A helical transmembrane segment spans residues 277–297 (IGVMVCVGIMAACPSGHAAIL). Over 298 to 333 (ISGNAKLRRAVTTILLWAQSSLKVRADHKADSRTLC) the chain is Cytoplasmic.

It belongs to the G-protein coupled receptor T2R family.

It localises to the membrane. In terms of biological role, receptor that may play a role in the perception of bitterness and is gustducin-linked. May play a role in sensing the chemical composition of the gastrointestinal content. The activity of this receptor may stimulate alpha gustducin, mediate PLC-beta-2 activation and lead to the gating of TRPM5. The protein is Taste receptor type 2 member 38 (TAS2R38) of Hylobates klossii (Kloss's gibbon).